The primary structure comprises 159 residues: MAETLSSLQDLKAATAVPTEEAPVYAQKLDAFGRAYATGKRKDAVARVWIKPGSGKVTVNGRPLDVYFARPVLRMILQQPLGVAKRVDQYDLMVTVAGGGLSGQAGAVRHGLAKALVNYEPELRSALKKEGFLTRDSRTVERKKYGKKKARRSFQFSKR.

Belongs to the universal ribosomal protein uS9 family.

The polypeptide is Small ribosomal subunit protein uS9 (Beijerinckia indica subsp. indica (strain ATCC 9039 / DSM 1715 / NCIMB 8712)).